A 342-amino-acid polypeptide reads, in one-letter code: Spermidine synthase (342 aa).

Residues 9-42 (MKGTELPVKRPREEEAETEMEAANNSNNGCEKEE) form a disordered region. Residues 52–289 (PGWFSEISPL…GMIGFMLCST (238 aa)) enclose the PABS domain. S-adenosyl 3-(methylsulfanyl)propylamine is bound at residue Gln-83. Tyr-113 contributes to the putrescine binding site. S-adenosyl 3-(methylsulfanyl)propylamine contacts are provided by residues Gln-114, Asp-138, Glu-158, 189–190 (DG), and Asp-208. Catalysis depends on Asp-208, which acts as the Proton acceptor. Putrescine contacts are provided by residues 208–211 (DSSD) and Tyr-277.

The protein belongs to the spermidine/spermine synthase family.

The enzyme catalyses S-adenosyl 3-(methylsulfanyl)propylamine + putrescine = S-methyl-5'-thioadenosine + spermidine + H(+). The protein operates within amine and polyamine biosynthesis; spermidine biosynthesis; spermidine from putrescine: step 1/1. The sequence is that of Spermidine synthase (SPDSYN) from Solanum lycopersicum (Tomato).